A 347-amino-acid chain; its full sequence is NADH-ubiquinone oxidoreductase chain 2 (347 aa).

11 consecutive transmembrane segments (helical) span residues P3–S23, H25–M45, Y59–L79, I96–P116, V122–L142, I145–G165, I178–P198, L202–V222, I240–F260, I276–L296, and L326–L346.

This sequence belongs to the complex I subunit 2 family. As to quaternary structure, core subunit of respiratory chain NADH dehydrogenase (Complex I) which is composed of 45 different subunits. Interacts with TMEM242.

Its subcellular location is the mitochondrion inner membrane. It catalyses the reaction a ubiquinone + NADH + 5 H(+)(in) = a ubiquinol + NAD(+) + 4 H(+)(out). Core subunit of the mitochondrial membrane respiratory chain NADH dehydrogenase (Complex I) which catalyzes electron transfer from NADH through the respiratory chain, using ubiquinone as an electron acceptor. Essential for the catalytic activity and assembly of complex I. The protein is NADH-ubiquinone oxidoreductase chain 2 of Peropteryx macrotis (Lesser dog-like bat).